A 436-amino-acid chain; its full sequence is ATP-dependent protease ATPase subunit HslU (436 aa).

ATP is bound by residues Ile18, 60–65 (GVGKTE), Asp249, Glu314, and Arg386.

The protein belongs to the ClpX chaperone family. HslU subfamily. In terms of assembly, a double ring-shaped homohexamer of HslV is capped on each side by a ring-shaped HslU homohexamer. The assembly of the HslU/HslV complex is dependent on binding of ATP.

It localises to the cytoplasm. In terms of biological role, ATPase subunit of a proteasome-like degradation complex; this subunit has chaperone activity. The binding of ATP and its subsequent hydrolysis by HslU are essential for unfolding of protein substrates subsequently hydrolyzed by HslV. HslU recognizes the N-terminal part of its protein substrates and unfolds these before they are guided to HslV for hydrolysis. This is ATP-dependent protease ATPase subunit HslU from Ruegeria sp. (strain TM1040) (Silicibacter sp.).